The chain runs to 915 residues: Translation initiation factor IF-2 (915 aa).

2 disordered regions span residues 1 to 105 (MSEG…RALT) and 121 to 295 (VEAA…RAAI). The segment covering 57–81 (PGTPSAPEGGSSSAPAPQSGNAPQG) has biased composition (low complexity). The span at 84–101 (RSGGGNRGSGRGGAGGAG) shows a compositional bias: gly residues. Composition is skewed to basic and acidic residues over residues 121–135 (VEAARREVERREQEK) and 143–180 (EEARRREEEAKRAAEEEARRKEQEEADRIAAEAARKAA). The segment covering 186 to 195 (AEAPPVPPPA) has biased composition (pro residues). Composition is skewed to low complexity over residues 201-213 (AAPSSRSAPSRTA) and 230-239 (KVPVAAPSAP). Residues 243-256 (RLRERGDEGEEERK) show a composition bias toward basic and acidic residues. Residues 266 to 278 (PAPRKAAAPVAKK) are compositionally biased toward low complexity. The span at 279–295 (AVAEPRRGGRIDVRAAI) shows a compositional bias: basic and acidic residues. Residues 414–584 (PRPPVVTVMG…LLQAEVLDLK (171 aa)) enclose the tr-type G domain. The interval 423–430 (GHVDHGKT) is G1. 423 to 430 (GHVDHGKT) contributes to the GTP binding site. The segment at 448 to 452 (GITQH) is G2. Positions 470–473 (DTPG) are G3. GTP contacts are provided by residues 470–474 (DTPGH) and 524–527 (NKCD). Residues 524-527 (NKCD) are G4. The segment at 560-562 (SAL) is G5.

This sequence belongs to the TRAFAC class translation factor GTPase superfamily. Classic translation factor GTPase family. IF-2 subfamily.

Its subcellular location is the cytoplasm. One of the essential components for the initiation of protein synthesis. Protects formylmethionyl-tRNA from spontaneous hydrolysis and promotes its binding to the 30S ribosomal subunits. Also involved in the hydrolysis of GTP during the formation of the 70S ribosomal complex. The protein is Translation initiation factor IF-2 of Granulibacter bethesdensis (strain ATCC BAA-1260 / CGDNIH1).